A 66-amino-acid chain; its full sequence is Large ribosomal subunit protein bL28 (66 aa).

The tract at residues 1–26 is disordered; the sequence is MAKDAITGARTRFGNQRSHALNSSRR. Residues 13 to 25 are compositionally biased toward polar residues; sequence FGNQRSHALNSSR.

It belongs to the bacterial ribosomal protein bL28 family.

In Leuconostoc mesenteroides subsp. mesenteroides (strain ATCC 8293 / DSM 20343 / BCRC 11652 / CCM 1803 / JCM 6124 / NCDO 523 / NBRC 100496 / NCIMB 8023 / NCTC 12954 / NRRL B-1118 / 37Y), this protein is Large ribosomal subunit protein bL28.